The sequence spans 363 residues: S-adenosylmethionine:tRNA ribosyltransferase-isomerase (363 aa).

It belongs to the QueA family. In terms of assembly, monomer.

It is found in the cytoplasm. It carries out the reaction 7-aminomethyl-7-carbaguanosine(34) in tRNA + S-adenosyl-L-methionine = epoxyqueuosine(34) in tRNA + adenine + L-methionine + 2 H(+). It functions in the pathway tRNA modification; tRNA-queuosine biosynthesis. Its function is as follows. Transfers and isomerizes the ribose moiety from AdoMet to the 7-aminomethyl group of 7-deazaguanine (preQ1-tRNA) to give epoxyqueuosine (oQ-tRNA). This chain is S-adenosylmethionine:tRNA ribosyltransferase-isomerase, found in Haemophilus influenzae (strain PittEE).